We begin with the raw amino-acid sequence, 133 residues long: NAD(P)H-quinone oxidoreductase subunit 3 (133 aa).

3 consecutive transmembrane segments (helical) span residues 22–44 (YLLG…SRLL), 77–97 (MFAL…PWAV), and 102–122 (LGLL…VGLA).

Belongs to the complex I subunit 3 family. In terms of assembly, NDH-1 can be composed of about 15 different subunits; different subcomplexes with different compositions have been identified which probably have different functions.

The protein resides in the cellular thylakoid membrane. The catalysed reaction is a plastoquinone + NADH + (n+1) H(+)(in) = a plastoquinol + NAD(+) + n H(+)(out). It carries out the reaction a plastoquinone + NADPH + (n+1) H(+)(in) = a plastoquinol + NADP(+) + n H(+)(out). NDH-1 shuttles electrons from an unknown electron donor, via FMN and iron-sulfur (Fe-S) centers, to quinones in the respiratory and/or the photosynthetic chain. The immediate electron acceptor for the enzyme in this species is believed to be plastoquinone. Couples the redox reaction to proton translocation, and thus conserves the redox energy in a proton gradient. Cyanobacterial NDH-1 also plays a role in inorganic carbon-concentration. The sequence is that of NAD(P)H-quinone oxidoreductase subunit 3 from Synechococcus sp. (strain ATCC 27144 / PCC 6301 / SAUG 1402/1) (Anacystis nidulans).